The sequence spans 235 residues: Acyl-protein thioesterase 1 (235 aa).

Residues S119, D172, and H206 each act as charge relay system in the active site.

The protein belongs to the AB hydrolase superfamily. AB hydrolase 2 family.

The protein localises to the cytoplasm. It is found in the nucleus. The enzyme catalyses S-hexadecanoyl-L-cysteinyl-[protein] + H2O = L-cysteinyl-[protein] + hexadecanoate + H(+). Functionally, hydrolyzes fatty acids from S-acylated cysteine residues in proteins with a strong preference for palmitoylated G-alpha proteins over other acyl substrates. Mediates the deacylation of G-alpha proteins such as GPA1 in vivo, but has weak or no activity toward palmitoylated Ras proteins. Has weak lysophospholipase activity in vitro; however such activity may not exist in vivo. This chain is Acyl-protein thioesterase 1, found in Eremothecium gossypii (strain ATCC 10895 / CBS 109.51 / FGSC 9923 / NRRL Y-1056) (Yeast).